We begin with the raw amino-acid sequence, 845 residues long: Taste receptor type 1 member 3 (845 aa).

An N-terminal signal peptide occupies residues 1-18; that stretch reads MAGLMLLSLMALLGLGAG. Over 19–568 the chain is Extracellular; sequence APLCLSRQLR…FLAWGQPAVL (550 aa). N128 and N262 each carry an N-linked (GlcNAc...) asparagine glycan. A helical transmembrane segment spans residues 569 to 589; the sequence is VLLILLALALGLVLVALGLFI. Over 590–601 the chain is Cytoplasmic; that stretch reads RHRDSPLVQASG. Residues 602–622 form a helical membrane-spanning segment; sequence GPRACFGLACLGLVCLSVLLF. The Extracellular portion of the chain corresponds to 623–637; it reads PGQPGPASCLAQQPL. Residues 638 to 658 form a helical membrane-spanning segment; the sequence is LHLPLTGCLSTLFLQAAQIFV. The Cytoplasmic segment spans residues 659 to 680; it reads GSELPSSWADQLRRCLQGPWAW. The chain crosses the membrane as a helical span at residues 681–701; sequence LLVLLALLAEAALCAWYLVAF. The Extracellular segment spans residues 702–727; sequence PPEVVTDWWVLPTQVLVHCRMRSWIS. A helical transmembrane segment spans residues 728 to 748; sequence FGLLHAINAMLAFLCFLGTFL. Residues 749 to 760 lie on the Cytoplasmic side of the membrane; the sequence is VQSRPGRYNGAR. The helical transmembrane segment at 761–781 threads the bilayer; sequence GLTFAMLAYFITWISFVPLFA. Residues 782 to 789 lie on the Extracellular side of the membrane; the sequence is NVHVAYQP. The chain crosses the membrane as a helical span at residues 790-810; sequence TVQMAAILLCALGILATFHLP. The Cytoplasmic portion of the chain corresponds to 811 to 845; that stretch reads KCYLLLQQLELNNPEFFLGDDARGQGSSGSGGKET.

The protein belongs to the G-protein coupled receptor 3 family. TAS1R subfamily. In terms of assembly, forms homodimers or heterodimers with TAS1R1 and TAS1R2.

The protein resides in the cell membrane. Its function is as follows. Putative taste receptor. TAS1R1/TAS1R3 responds to the umami taste stimulus (the taste of monosodium glutamate). TAS1R2/TAS1R3 recognizes diverse natural and synthetic sweeteners. TAS1R3 is essential for the recognition and response to the disaccharide trehalose. Sequence differences within and between species can significantly influence the selectivity and specificity of taste responses. The protein is Taste receptor type 1 member 3 (TAS1R3) of Canis lupus familiaris (Dog).